We begin with the raw amino-acid sequence, 262 residues long: Ribosomal RNA small subunit methyltransferase A (262 aa).

Residues Asn13, Leu15, Gly40, Glu61, Asp85, and Asn105 each coordinate S-adenosyl-L-methionine.

Belongs to the class I-like SAM-binding methyltransferase superfamily. rRNA adenine N(6)-methyltransferase family. RsmA subfamily.

It localises to the cytoplasm. The catalysed reaction is adenosine(1518)/adenosine(1519) in 16S rRNA + 4 S-adenosyl-L-methionine = N(6)-dimethyladenosine(1518)/N(6)-dimethyladenosine(1519) in 16S rRNA + 4 S-adenosyl-L-homocysteine + 4 H(+). In terms of biological role, specifically dimethylates two adjacent adenosines (A1518 and A1519) in the loop of a conserved hairpin near the 3'-end of 16S rRNA in the 30S particle. May play a critical role in biogenesis of 30S subunits. This chain is Ribosomal RNA small subunit methyltransferase A, found in Laribacter hongkongensis (strain HLHK9).